The chain runs to 1054 residues: Proteoglycan 4 (1054 aa).

The first 24 residues, 1–24 (MGWKILPVCLSLLLPVVLIQQVSS), serve as a signal peptide directing secretion. SMB domains are found at residues 26–69 (DLSS…PELS) and 66–108 (PELS…EEVH). Intrachain disulfides connect cysteine 30-cysteine 34, cysteine 30-cysteine 46, cysteine 34-cysteine 64, cysteine 44-cysteine 46, cysteine 44-cysteine 57, cysteine 50-cysteine 56, cysteine 57-cysteine 64, cysteine 70-cysteine 74, cysteine 70-cysteine 86, cysteine 74-cysteine 104, cysteine 84-cysteine 86, cysteine 84-cysteine 97, cysteine 90-cysteine 96, and cysteine 97-cysteine 104. Asparagine 109 carries an N-linked (GlcNAc...) asparagine glycan. Residues 110 to 125 (STSPSSKTAPTPAGAS) show a composition bias toward low complexity. The segment at 110–764 (STSPSSKTAP…PLIPGPPVLF (655 aa)) is disordered. O-linked (GalNAc...) serine glycosylation occurs at serine 135. Residues 162-175 (QESSSSSSSSSSTI) show a composition bias toward low complexity. Over residues 188–200 (ELQKNPNVKDNKK) the composition is skewed to basic and acidic residues. A compositionally biased stretch (pro residues) spans 229-238 (TPPPPDPPTT). Threonine 237 and threonine 250 each carry an O-linked (GalNAc...) threonine glycan. Over residues 286–295 (TTATNKQSSA) the composition is skewed to low complexity. Residue threonine 301 is glycosylated (O-linked (GalNAc...) threonine). O-linked (GalNAc...) serine glycosylation occurs at serine 302. The span at 302-318 (SVKETRSAEKTSDKDVE) shows a compositional bias: basic and acidic residues. Residue threonine 306 is glycosylated (O-linked (GalNAc...) threonine). Serine 313 carries O-linked (GalNAc...) serine glycosylation. One copy of the 1; approximate repeat lies at 317 to 324 (VEPTSTTP). Residues 317–618 (VEPTSTTPKN…TPKKPEPTTT (302 aa)) are 37 X 8 AA repeats of K-X-P-X-P-T-T-X. A compositionally biased stretch (polar residues) spans 319–328 (PTSTTPKNSA). The 2; approximate repeat unit spans residues 325–332 (KNSAPTTT). O-linked (GalNAc...) serine glycosylation is present at serine 327. Residues 329–339 (PTTTKKPVTTT) are compositionally biased toward low complexity. Residues threonine 330, threonine 338, threonine 354, threonine 362, threonine 369, threonine 377, threonine 378, threonine 385, threonine 386, threonine 393, and threonine 394 are each glycosylated (O-linked (GalNAc...) threonine). Residues 333–340 (KKPVTTTK) form a 3; approximate repeat. One copy of the 4; approximate repeat lies at 349–356 (QEPEPTTA). Repeat 5 spans residues 357-364 (KEPPPTTK). The segment covering 364–399 (KKPEPTTRKEPEPTTPKEPEPTTPKEPEPTTPKEPE) has biased composition (basic and acidic residues). The 6; approximate repeat unit spans residues 365–371 (KPEPTTR). 5 tandem repeats follow at residues 372–379 (KEPEPTTP), 380–387 (KEPEPTTP), 388–395 (KEPEPTTP), 396–403 (KEPEPTTP), and 404–411 (KEPPPTTK). Positions 400 to 426 (PTTPKEPPPTTKKPEPTTPKEPGPTTP) are enriched in pro residues. The stretch at 412 to 418 (KPEPTTP) is one 12; approximate repeat. 8 O-linked (GalNAc...) threonine glycosylation sites follow: threonine 416, threonine 417, threonine 424, threonine 432, threonine 433, threonine 440, threonine 441, and threonine 448. Tandem repeats lie at residues 419 to 426 (KEPGPTTP), 427 to 434 (KEPEPTTT), and 435 to 442 (KEPEPTTT). Basic and acidic residues predominate over residues 427–550 (KEPEPTTTKE…PEPTTPKKPE (124 aa)). The stretch at 443-450 (KEPESTTR) is one 16; approximate repeat. 21 tandem repeats follow at residues 451 to 458 (KEPEPTTP), 459 to 466 (KEPEPTTP), 467 to 474 (KEPEPTTL), 475 to 482 (KEPEPTTP), 483 to 490 (KEPEPTTP), 491 to 498 (KEPEPTTP), 499 to 506 (KEPEPTTP), 507 to 514 (KEPEPTTP), 515 to 522 (KEPEPTTP), 523 to 530 (KEPEPTTP), 531 to 538 (KEPEPTTP), 539 to 546 (KEPEPTTP), 547 to 554 (KKPEPTTP), 555 to 562 (KEPVPTTP), 563 to 570 (KEPEPTTP), 571 to 578 (KEPEPTTP), 579 to 586 (KEPEPTTR), 587 to 594 (KEPEPTTP), 595 to 602 (KEPEPTTP), 603 to 610 (KEPEPTTP), and 611 to 618 (KKPEPTTT). Residues threonine 472, threonine 480, threonine 481, threonine 488, threonine 489, threonine 496, threonine 497, threonine 504, threonine 505, threonine 512, threonine 520, threonine 521, threonine 528, and threonine 529 are each glycosylated (O-linked (GalNAc...) threonine). The span at 551–562 (PTTPKEPVPTTP) shows a compositional bias: pro residues. O-linked (GalNAc...) threonine glycans are attached at residues threonine 553, threonine 560, threonine 561, threonine 568, threonine 569, threonine 576, and threonine 577. Residues 563-614 (KEPEPTTPKEPEPTTPKEPEPTTRKEPEPTTPKEPEPTTPKEPEPTTPKKPE) show a composition bias toward basic and acidic residues. Threonine 592, threonine 600, and threonine 601 each carry an O-linked (GalNAc...) threonine glycan. Residues 615 to 624 (PTTTSPKTTT) show a composition bias toward low complexity. Threonine 622, threonine 624, threonine 628, threonine 629, and threonine 692 each carry an O-linked (GalNAc...) threonine glycan. Over residues 672–699 (KPTKKPTKAPKKPTSTKKPKTPKTRKPK) the composition is skewed to basic residues. Residues 700-712 (TTPSPLKTTSATP) are compositionally biased toward low complexity. Over residues 713-735 (ELNTTPLEVMLPTTTIPKQTPNP) the composition is skewed to polar residues. A disulfide bridge connects residues cysteine 795 and cysteine 1053. Hemopexin repeat units follow at residues 797–840 (GKPV…VWGI) and 841–888 (PSPI…FGGL). Asparagine 808 is a glycosylation site (N-linked (GlcNAc...) asparagine). Threonine 810 is a glycosylation site (O-linked (GalNAc...) threonine). A glycan (N-linked (GlcNAc...) asparagine) is linked at asparagine 938.

As to quaternary structure, homodimer; disulfide-linked. In terms of processing, N-glycosylated. Post-translationally, O-glycosylated; contains glycosaminoglycan chondroitin sulfate and keratan sulfate. O-glycosylated with sialylated oligosaccharides which are predominantly represented by the monosialylated core type I structure, NeuNAcalpha2-3Galbeta1-3GalNAc, with smaller amounts of disialylated O-glycans. The disulfide bond between Cys-795 and Cys-1053 is essential for protein cleavage. In terms of processing, proteolytically cleaved by cathepsin CTSG. Highly expressed in cartilage, bone and liver and weakly expressed in heart, brain and muscle. Expressed in the surface chondrocytes and in synovial intimal cells. Isoform B is expressed in bone, small intestine, muscle, testis, heart, liver and lung. Isoform C and isoform D are widely expressed.

Its subcellular location is the secreted. In terms of biological role, plays a role in boundary lubrication within articulating joints. Prevents protein deposition onto cartilage from synovial fluid by controlling adhesion-dependent synovial growth and inhibiting the adhesion of synovial cells to the cartilage surface. This Mus musculus (Mouse) protein is Proteoglycan 4 (Prg4).